A 124-amino-acid chain; its full sequence is MDIPISSRDFRGLQLACVALGLVAGSIIIGISVSKAAAAMGGVFIGAAVLGLLILAYPFLKARFNLDHILPTIGSLRIHPHPGADHGEGRSSTNGNKEGARSSLSTVSRTLEKLKPGTRGAEEC.

2 helical membrane passes run 13–33 and 40–60; these read LQLA…GISV and MGGV…YPFL. The tract at residues 80–124 is disordered; that stretch reads PHPGADHGEGRSSTNGNKEGARSSLSTVSRTLEKLKPGTRGAEEC. Positions 90-109 are enriched in polar residues; sequence RSSTNGNKEGARSSLSTVSR. Basic and acidic residues predominate over residues 110-124; the sequence is TLEKLKPGTRGAEEC.

Its subcellular location is the membrane. May play a role in stabilizing dense microtubular networks or in vesicular trafficking. The polypeptide is Kinocilin (KNCN) (Homo sapiens (Human)).